We begin with the raw amino-acid sequence, 649 residues long: Echinoderm microtubule-associated protein-like 2 (649 aa).

Residues 10-649 (KEVIFSMEEG…DTSVLQWRVA (640 aa)) form a tandem atypical propeller in EMLs region. WD repeat units follow at residues 56-93 (KLDW…LYSV), 97-144 (RQRH…VWDS), 151-192 (HVLG…VWDW), 195-234 (ESKV…FWSL), 241-280 (KRQG…VWGK), 285-323 (ITQE…LWGS), 369-406 (FSLL…LWSS), 410-447 (QPVW…LLDT), 452-489 (LVAI…VYTV), 495-535 (KVSR…YWDP), 564-602 (FGIW…LFSY), and 609-648 (ALSH…QWRV). The stretch at 65–106 (GRDCRANLYLLPTGEVVYFVASVAVLYSVEEQRQRHYLGHND) forms a coiled coil.

Belongs to the WD repeat EMAP family. In terms of assembly, interacts with GRID2 and may also interact with GRID1. Interacts with EML3. Binds unpolymerized tubulins via its WD repeat region.

The protein localises to the cytoplasm. The protein resides in the cytoskeleton. It is found in the spindle. In terms of biological role, tubulin binding protein that inhibits microtubule nucleation and growth, resulting in shorter microtubules. The protein is Echinoderm microtubule-associated protein-like 2 (Eml2) of Mus musculus (Mouse).